The primary structure comprises 387 residues: Homoserine O-succinyltransferase (387 aa).

Residues 45 to 354 (NAVLVCHALN…DAPHGHDAFL (310 aa)) form the AB hydrolase-1 domain. Ser151 serves as the catalytic Nucleophile. Position 221 (Arg221) interacts with substrate. Active-site residues include Asp317 and His350. Position 351 (Asp351) interacts with substrate.

Belongs to the AB hydrolase superfamily. MetX family. As to quaternary structure, homodimer.

It is found in the cytoplasm. The enzyme catalyses L-homoserine + succinyl-CoA = O-succinyl-L-homoserine + CoA. It participates in amino-acid biosynthesis; L-methionine biosynthesis via de novo pathway; O-succinyl-L-homoserine from L-homoserine: step 1/1. Functionally, transfers a succinyl group from succinyl-CoA to L-homoserine, forming succinyl-L-homoserine. The polypeptide is Homoserine O-succinyltransferase (Methylibium petroleiphilum (strain ATCC BAA-1232 / LMG 22953 / PM1)).